The sequence spans 225 residues: Uracil-DNA glycosylase (225 aa).

Asp-65 functions as the Proton acceptor in the catalytic mechanism.

It belongs to the uracil-DNA glycosylase (UDG) superfamily. UNG family.

It is found in the cytoplasm. It carries out the reaction Hydrolyzes single-stranded DNA or mismatched double-stranded DNA and polynucleotides, releasing free uracil.. Its function is as follows. Excises uracil residues from the DNA which can arise as a result of misincorporation of dUMP residues by DNA polymerase or due to deamination of cytosine. This is Uracil-DNA glycosylase from Bacillus cytotoxicus (strain DSM 22905 / CIP 110041 / 391-98 / NVH 391-98).